We begin with the raw amino-acid sequence, 173 residues long: Small ribosomal subunit protein uS5 (173 aa).

The region spanning 18–81 (YVEKLVKLNR…EKAKANMVTF (64 aa)) is the S5 DRBM domain.

It belongs to the universal ribosomal protein uS5 family. Part of the 30S ribosomal subunit. Contacts proteins S4 and S8.

With S4 and S12 plays an important role in translational accuracy. In terms of biological role, located at the back of the 30S subunit body where it stabilizes the conformation of the head with respect to the body. This chain is Small ribosomal subunit protein uS5, found in Treponema denticola (strain ATCC 35405 / DSM 14222 / CIP 103919 / JCM 8153 / KCTC 15104).